The chain runs to 523 residues: MNTRNPDKVVIVGGGTAGWMTASYLKKAFGERVSVTLVESGTIGTVGVGEATFSDIRHFFEFLDLREEEWMPACNATYKLAVRFQDWQRPGHHFYHPFEQMRSVDGFPLTDWWLQNGPTDRFDRDCFVMASLCDAGRSPRYLNGSLLQQEFDERAEEPAGLTMSEHQGKTQFPYAYHFEAALLAEFLSGYSKDRGVKHVVDEVLEVKLDDRGWISHVVTKEHGDIGGDLFVDCTGFRGVLLNQALGVPFVSYQDTLPNDSAVALQVPLDMEARGIPPYTRATAKEAGWIWTIPLIGRIGTGYVYAKDYCSPEEAERTLREFVGPEAADVEANHIRMRIGRSEQSWKNNCVAIGLSSGFVEPLESTGIFFIHHAIEQLVKHFPAGDWHPQLRAGYNSAVANVMDGVREFLVLHYLGAARNDTRYWKDTKTRAVPDALAERIERWKVQLPDSENVFPYYHGLPPYSYMAILLGTGAIGLRPSPALALADPAAAEKEFTAIRDRARFLVDTLPSQYEYFAAMGQRV.

FAD contacts are provided by Gly-14, Ser-40, Ile-43, Val-46, Val-48, and Ala-51. The active site involves Lys-79. An L-tryptophan-binding site is contributed by Pro-97. FAD contacts are provided by Val-203 and Leu-354. Positions 365 and 366 each coordinate chloride. FAD is bound at residue Ile-367. 2 residues coordinate L-tryptophan: Tyr-456 and Tyr-457.

It belongs to the flavin-dependent halogenase family. Bacterial tryptophan halogenase subfamily. As to quaternary structure, homodimer.

It catalyses the reaction L-tryptophan + FADH2 + chloride + O2 = 6-chloro-L-tryptophan + FAD + 2 H2O. It carries out the reaction D-tryptophan + FADH2 + chloride + O2 = 6-chloro-D-tryptophan + FAD + 2 H2O. In terms of biological role, catalyzes the chlorination of tryptophan (Trp) at C6 position to yield 6-chloro-tryptophan. Accepts both L and D-Trp as the substrates. The enzyme also uses bromide to yield 6-bromo-Trp. In vitro, can also catalyze the halogenation of 3-indolepropionic acid, N-methyltryptophan and non-indolic aromatic substrates such as kynurenine, anthranilamide and N-phenylanthranilic acid. The protein is Tryptophan 6-halogenase SttH of Streptomyces toxytricini (Actinomyces toxytricini).